Consider the following 802-residue polypeptide: uncharacterized protein (802 aa).

In terms of domain architecture, EF-hand 1 spans 6–41 (SRSEKVKRIFQQFDGNLDGGLSREEMSALVVAVNPR). TPR repeat units lie at residues 229–262 (FDGHMAIGKVLYEHQLFKEALVSFKRACELQPTD), 264–296 (RPHFKAGNCLYVLGKYKESKDEFLLALEAAESG), 305–338 (PQIYVNLGISLEGEGMVLSACEYYREAAILCPTH), 339–372 (YRALKLLGSALFGVGEYRAAVKALEEAIYLKPDY), 373–406 (ADAHCDLASSLHAMGEDERAIEVFQRAIDLKPGH), 407–440 (VDALYNLGGLYMDLGRFQRASEMYTRVLAVWPNH), and 442–474 (RAQLNKAVSLLGAGETEEAKRALKEALKMTNRV). Residues 595 to 630 (AIKAINEKILSVLDDSGSGRVDLGMFYAVIAPLCGG) form the EF-hand 2 domain.

This is an uncharacterized protein from Arabidopsis thaliana (Mouse-ear cress).